A 155-amino-acid polypeptide reads, in one-letter code: MADLKQLMDNEVLMAFTSYATIILAKMMFLSSATAFQRLTNKVFANPEDCAGFGKGENAKKFLRTDEKVERVRRAHLNDLENIVPFLGIGLLYSLSGPDLSTALIHFRIFVGARIYHTIAYLTPLPQPNRGLAFFVGYGVTLSMAYRLLRSRLYL.

At Asp3–Asp9 the chain is on the lumenal side. Residues Asn10–Ala33 traverse the membrane as a helical segment. The Cytoplasmic segment spans residues Thr34–Phe62. Arg38 is a glutathione binding site. Residues Lys42, Lys55, and Lys60 each carry the N6-acetyllysine modification. A helical transmembrane segment spans residues Leu63–Ser96. Glutathione is bound by residues Arg73, Arg74, His76, and Glu81. At Tyr93 the chain carries 3'-nitrotyrosine; in vitro. Residues Gly97–Asp99 are Lumenal-facing. A helical transmembrane segment spans residues Leu100 to Thr123. Tyr121 contacts glutathione. At Pro124–Pro128 the chain is on the cytoplasmic side. A helical membrane pass occupies residues Asn129 to Leu148. At Leu149–Leu155 the chain is on the lumenal side.

Belongs to the MAPEG family. Homotrimer; The trimer binds only one molecule of glutathione. In vitro, peroxynitrite induces nitration at Tyr-93 which activates the enzyme. Highest in the liver, followed by kidney and testis and much lower in seminal vesicles, spleen, lung and brain.

It is found in the endoplasmic reticulum membrane. It localises to the mitochondrion outer membrane. The catalysed reaction is RX + glutathione = an S-substituted glutathione + a halide anion + H(+). In vitro, can be activated by reagents that attack Cys-50 sulfhydryl, such as N-ethylmaleimide and via nitration of Tyr-93 by peroxynitrite. Its function is as follows. Conjugation of reduced glutathione to a wide number of exogenous and endogenous hydrophobic electrophiles. This Rattus norvegicus (Rat) protein is Microsomal glutathione S-transferase 1 (Mgst1).